Consider the following 493-residue polypeptide: 3-octaprenyl-4-hydroxybenzoate carboxy-lyase (493 aa).

Asn-172 is a Mn(2+) binding site. Residues Ile-175 to Arg-177, Arg-189 to Leu-191, and Arg-194 to Gly-195 each bind prenylated FMN. Glu-238 is a Mn(2+) binding site. Catalysis depends on Asp-287, which acts as the Proton donor.

The protein belongs to the UbiD family. In terms of assembly, homohexamer. The cofactor is prenylated FMN. Requires Mn(2+) as cofactor.

It is found in the cell membrane. The enzyme catalyses a 4-hydroxy-3-(all-trans-polyprenyl)benzoate + H(+) = a 2-(all-trans-polyprenyl)phenol + CO2. It functions in the pathway cofactor biosynthesis; ubiquinone biosynthesis. In terms of biological role, catalyzes the decarboxylation of 3-octaprenyl-4-hydroxy benzoate to 2-octaprenylphenol, an intermediate step in ubiquinone biosynthesis. The protein is 3-octaprenyl-4-hydroxybenzoate carboxy-lyase of Shewanella frigidimarina (strain NCIMB 400).